Consider the following 120-residue polypeptide: HTH-type transcriptional regulator NmtR (120 aa).

The HTH arsR-type domain occupies 15–109 (LDSQAAAQVA…EAIYHSEHLH (95 aa)). Positions 49 to 72 (VTDLAEAIGMEQSAVSHQLRVLRN) form a DNA-binding region, H-T-H motif. Residues aspartate 91, histidine 93, histidine 104, and histidine 107 each contribute to the Ni(2+) site.

In terms of assembly, homodimer.

Its activity is regulated as follows. Binding to DNA is inhibited by nickel and, to some extent, cobalt ions. Represses transcription of ctpJ/nmtA, by binding to its promoter region. The chain is HTH-type transcriptional regulator NmtR (nmtR) from Mycobacterium tuberculosis (strain ATCC 25618 / H37Rv).